The following is a 98-amino-acid chain: NADH-ubiquinone oxidoreductase chain 4L (98 aa).

The next 3 membrane-spanning stretches (helical) occupy residues methionine 1–methionine 21, serine 29–leucine 49, and isoleucine 61–valine 81.

Belongs to the complex I subunit 4L family. As to quaternary structure, core subunit of respiratory chain NADH dehydrogenase (Complex I) which is composed of 45 different subunits.

Its subcellular location is the mitochondrion inner membrane. The catalysed reaction is a ubiquinone + NADH + 5 H(+)(in) = a ubiquinol + NAD(+) + 4 H(+)(out). Core subunit of the mitochondrial membrane respiratory chain NADH dehydrogenase (Complex I) which catalyzes electron transfer from NADH through the respiratory chain, using ubiquinone as an electron acceptor. Part of the enzyme membrane arm which is embedded in the lipid bilayer and involved in proton translocation. The protein is NADH-ubiquinone oxidoreductase chain 4L (MT-ND4L) of Ommatophoca rossii (Ross seal).